The primary structure comprises 115 residues: DNA repair protein homolog YozK (115 aa).

Residues 12-115 form the UmuC domain; sequence ILCVDMKSFY…EKCVHTYSID (104 aa). Positions 16 and 115 each coordinate Mg(2+).

Belongs to the DNA polymerase type-Y family. It depends on Mg(2+) as a cofactor.

This Bacillus subtilis (strain 168) protein is DNA repair protein homolog YozK (yozK).